Reading from the N-terminus, the 417-residue chain is Phosphoglycerate kinase 1 (417 aa).

S2 is subject to N-acetylserine. 2 positions are modified to phosphoserine: S2 and S4. K6 is subject to N6-succinyllysine. Residue K11 is modified to N6-acetyllysine. Residues V23, D24, F25, N26, Q38, and R39 each contribute to the (2R)-3-phosphoglycerate site. Residues 38 to 43 are mitochondrial targeting region exposed following cis-trans isomerization by PIN1 and recognized by the TOM complex for mitochondrial translocation of the protein; sequence QRIKAA. K48 bears the N6-acetyllysine; alternate mark. K48 carries the N6-succinyllysine; alternate modification. Residues S62, H63, G65, and R66 each contribute to the (2R)-3-phosphoglycerate site. The residue at position 75 (K75) is an N6-acetyllysine. Residue Y76 is modified to Phosphotyrosine. 2 positions are modified to N6-acetyllysine: K86 and K91. K97 carries the post-translational modification N6-acetyllysine; alternate. K97 bears the N6-(2-hydroxyisobutyryl)lysine; alternate mark. L122 and R123 together coordinate (2R)-3-phosphoglycerate. At K131 the chain carries N6-acetyllysine; alternate. Residue K131 is modified to N6-malonyllysine; alternate. K146 bears the N6-acetyllysine mark. 2 residues coordinate (2R)-3-phosphoglycerate: H170 and R171. N6-succinyllysine is present on K191. Y196 bears the Phosphotyrosine mark. K199 carries the N6-acetyllysine modification. A Phosphoserine modification is found at S203. Residue G214 coordinates ADP. A CDP-binding site is contributed by G214. The AMP site is built by A215 and K216. A215 contributes to the ATP binding site. A215 is a binding site for Mg(2+). Residue K216 is modified to N6-(2-hydroxyisobutyryl)lysine. Mg(2+) contacts are provided by A218 and D219. A CDP-binding site is contributed by D219. Position 220 (K220) interacts with AMP. ATP is bound at residue K220. K220 is subject to N6-(2-hydroxyisobutyryl)lysine. G238 contributes to the ADP binding site. A CDP-binding site is contributed by G238. Residue G239 coordinates AMP. G239 lines the ATP pocket. N6-acetyllysine occurs at positions 267 and 291. G313 provides a ligand contact to AMP. G313 provides a ligand contact to ATP. K323 is subject to N6-(2-hydroxyisobutyryl)lysine. 3 residues coordinate CDP: G338, V340, and F343. F343 contacts ADP. E344 provides a ligand contact to AMP. Residue E344 participates in ATP binding. K361 is subject to N6-acetyllysine. Residues D375 and T376 each coordinate ATP. D375 provides a ligand contact to Mg(2+).

The protein belongs to the phosphoglycerate kinase family. Monomer. Interacts with kinase MAPK1/ERK2; the interaction is direct, occurs under hypoxic conditions, and promotes its interaction with PIN1. Interacts with peptidyl-prolyl cis-trans isomerase PIN1; the interaction is direct, occurs under hypoxic conditions, and targets the protein to the mitochondrion by promoting interactions with the TOM complex. Interacts with mitochondrial circRNA mcPGK1 (via its 2nd stem-loop); the interaction is direct and targets the protein to the mitochondrion by promoting interactions with the TOM complex. Interacts with pyruvate dehydrogenase kinase PDK1; the interaction is direct, occurs under hypoxic conditions and leads to PDK1-mediated inhibition of pyruvate dehydrogenase complex activity. The cofactor is Mg(2+). Post-translationally, phosphorylated at Ser-203 by MAPK1/ERK2 under hypoxic conditions, which promotes its mitochondrial targeting.

It localises to the cytoplasm. Its subcellular location is the cytosol. The protein localises to the mitochondrion matrix. It carries out the reaction (2R)-3-phosphoglycerate + ATP = (2R)-3-phospho-glyceroyl phosphate + ADP. The catalysed reaction is L-seryl-[protein] + ATP = O-phospho-L-seryl-[protein] + ADP + H(+). It participates in carbohydrate degradation; glycolysis; pyruvate from D-glyceraldehyde 3-phosphate: step 2/5. Its function is as follows. Catalyzes one of the two ATP producing reactions in the glycolytic pathway via the reversible conversion of 1,3-diphosphoglycerate to 3-phosphoglycerate. Both L- and D- forms of purine and pyrimidine nucleotides can be used as substrates, but the activity is much lower on pyrimidines. In addition to its role as a glycolytic enzyme, it seems that PGK-1 acts as a polymerase alpha cofactor protein (primer recognition protein). Acts as a protein kinase when localized to the mitochondrion where it phosphorylates pyruvate dehydrogenase kinase PDK1 to inhibit pyruvate dehydrogenase complex activity and suppress the formation of acetyl-coenzyme A from pyruvate, and consequently inhibit oxidative phosphorylation and promote glycolysis. May play a role in sperm motility. This is Phosphoglycerate kinase 1 (PGK1) from Cricetulus griseus (Chinese hamster).